Here is an 802-residue protein sequence, read N- to C-terminus: Elongation factor G, mitochondrial (802 aa).

Residues 1 to 24 (MRYPSLARLPRRALSGLARAPVRL) constitute a mitochondrion transit peptide. The tr-type G domain maps to 100–387 (SRVRNIGIAA…GVIDYLPNPS (288 aa)). Residues 109–116 (AHIDSGKT), 185–189 (DTPGH), and 239–242 (NKMD) each bind GTP.

It belongs to the TRAFAC class translation factor GTPase superfamily. Classic translation factor GTPase family. EF-G/EF-2 subfamily.

Its subcellular location is the mitochondrion. It functions in the pathway protein biosynthesis; polypeptide chain elongation. Functionally, mitochondrial GTPase that catalyzes the GTP-dependent ribosomal translocation step during translation elongation. During this step, the ribosome changes from the pre-translocational (PRE) to the post-translocational (POST) state as the newly formed A-site-bound peptidyl-tRNA and P-site-bound deacylated tRNA move to the P and E sites, respectively. Catalyzes the coordinated movement of the two tRNA molecules, the mRNA and conformational changes in the ribosome. This is Elongation factor G, mitochondrial (mef1) from Aspergillus terreus (strain NIH 2624 / FGSC A1156).